Consider the following 466-residue polypeptide: 55 kDa erythrocyte membrane protein (466 aa).

An N-acetylthreonine modification is found at Thr2. Ser19 is subject to Phosphoserine. Residue Thr49 is modified to Phosphothreonine. A phosphoserine mark is found at Ser57 and Ser110. The PDZ domain maps to 71 to 152 (LIQFEKVTEE…MISLKVIPNQ (82 aa)). Residues 158–228 (ALQMFMRAQF…PSPELQEWRV (71 aa)) form the SH3 domain. Ser243 carries the phosphoserine modification. The interval 268–466 (VVSYEEVVRL…PQWVPVSWVY (199 aa)) is interaction with PALS1. A Guanylate kinase-like domain is found at 282–451 (RKTLVLIGAS…TLKTLQETFD (170 aa)).

It belongs to the MAGUK family. Heterodimer with PALS1. Interacts with DLG5 and NF2. Interacts (via guanylate kinase-like domain) with WHRN (via third PDZ domain). Interacts with PALS1. In terms of processing, palmitoylated.

It is found in the cell membrane. The protein resides in the cell projection. Its subcellular location is the stereocilium. Essential regulator of neutrophil polarity. Regulates neutrophil polarization by regulating AKT1 phosphorylation through a mechanism that is independent of PIK3CG activity. The sequence is that of 55 kDa erythrocyte membrane protein (MPP1) from Bos taurus (Bovine).